A 315-amino-acid chain; its full sequence is Acyl transferase (315 aa).

Active-site charge relay system residues include Ser116, Asp213, and His243.

It belongs to the LuxD family.

It functions in the pathway lipid metabolism; fatty acid reduction for biolumincescence. Acyl transferase is part of the fatty acid reductase system required for aldehyde biosynthesis; it produces fatty acids for the luminescent reaction. This is Acyl transferase from Photobacterium leiognathi.